We begin with the raw amino-acid sequence, 99 residues long: Large ribosomal subunit protein bL27 (99 aa).

A propeptide spanning residues 1–12 (MMINNLEALKLF) is cleaved from the precursor. Positions 15–36 (HKGGGSTANGRNSAGRRLGAKR) are disordered.

Belongs to the bacterial ribosomal protein bL27 family. In terms of processing, the N-terminus is cleaved by ribosomal processing cysteine protease Prp.

This Lactobacillus johnsonii (strain CNCM I-12250 / La1 / NCC 533) protein is Large ribosomal subunit protein bL27.